The following is a 283-amino-acid chain: uncharacterized protein (283 aa).

Tyr-55 functions as the Proton donor in the catalytic mechanism.

It belongs to the aldo/keto reductase family.

It is found in the cytoplasm. It localises to the nucleus. This is an uncharacterized protein from Schizosaccharomyces pombe (strain 972 / ATCC 24843) (Fission yeast).